Consider the following 547-residue polypeptide: Probable FMN/FAD exporter YeeO (547 aa).

A run of 11 helical transmembrane segments spans residues 94-114, 139-159, 174-194, 211-231, 246-268, 281-301, 318-338, 350-370, 404-424, 439-459, and 486-506; these read ITPL…MGVL, VIMA…AFSL, SLVI…HFGE, LALT…ITLI, LLIN…YGLF, GLTI…AIGF, FSII…SVLF, AGMG…AALI, VFWL…PFAG, VVVI…ASWV, and VVVG…VWMG.

The protein belongs to the multi antimicrobial extrusion (MATE) (TC 2.A.66.1) family.

Its subcellular location is the cell inner membrane. Functionally, a transporter able to export peptides and flavins. When overexpressed allows cells deleted for multiple peptidases (pepA, pepB, pepD and pepN) to grow in the presence of dipeptides Ala-Gln or Gly-Tyr which otherwise inhibit growth. Cells overexpressing this protein have decreased intracellular levels of Ala-Gln dipeptide, and in a system that produces the Ala-Gln dipeptide, overproduction of this protein increases its export. When overexpressed increases secretion of FMN and FAD but not riboflavin; intracellular concentrations of FMN and riboflavin rise, possibly to compensate for increased secretion. Increased overexpression causes slight cell elongation. The chain is Probable FMN/FAD exporter YeeO (yeeO) from Escherichia coli (strain K12).